The primary structure comprises 461 residues: Ornithine decarboxylase (461 aa).

Lys-69 carries the N6-(pyridoxal phosphate)lysine modification. Pyridoxal 5'-phosphate is bound by residues Ser-200, Gly-237, and 274–277 (EPGR). Position 303 is a phosphoserine; by CK2 (Ser-303). 331–332 (YD) provides a ligand contact to substrate. The Proton donor; shared with dimeric partner role is filled by Cys-360. Cys-360 is subject to S-nitrosocysteine; in inhibited form. Asp-361 lines the substrate pocket. Tyr-389 provides a ligand contact to pyridoxal 5'-phosphate.

It belongs to the Orn/Lys/Arg decarboxylase class-II family. In terms of assembly, homodimer. Only the dimer is catalytically active, as the active sites are constructed of residues from both monomers. Does not form a heterodimer with AZIN2. Pyridoxal 5'-phosphate serves as cofactor. In terms of processing, S-Nitrosylation inhibits the enzyme. S-Nitrosylated in vitro on 4 cysteine residues.

It catalyses the reaction L-ornithine + H(+) = putrescine + CO2. It participates in amine and polyamine biosynthesis; putrescine biosynthesis via L-ornithine pathway; putrescine from L-ornithine: step 1/1. Its activity is regulated as follows. Inhibited by S-nitrosylation. Inhibited by antizymes (AZs) OAZ1, OAZ2 and OAZ3 in response to polyamine levels. AZs inhibit the assembly of the functional homodimer by binding to ODC monomers. Additionally, OAZ1 targets ODC monomers for ubiquitin-independent proteolytic destruction by the 26S proteasome. Inhibited by 1-amino-oxy-3-aminopropane (APA, an isosteric analog of putrescine). Irreversibly inhibited by alpha-difluoromethylornithine (DFMO). Functionally, catalyzes the first and rate-limiting step of polyamine biosynthesis that converts ornithine into putrescine, which is the precursor for the polyamines, spermidine and spermine. Polyamines are essential for cell proliferation and are implicated in cellular processes, ranging from DNA replication to apoptosis. This chain is Ornithine decarboxylase (ODC1), found in Homo sapiens (Human).